The following is a 505-amino-acid chain: 4-trimethylaminobutyraldehyde dehydrogenase (505 aa).

NAD(+) is bound by residues lysine 191 and 243-247; that span reads GSVPT. The Proton acceptor role is filled by glutamate 265. Catalysis depends on cysteine 299, which acts as the Nucleophile. Glutamate 402 serves as a coordination point for NAD(+).

The protein belongs to the aldehyde dehydrogenase family. In terms of assembly, homotetramer. Constitutively expressed in all organs tested: brain, eye, gill, GI, heart, liver, kidney, muscle, skin, testis and ovary.

It localises to the cytoplasm. The protein localises to the cytosol. It catalyses the reaction 4-(trimethylamino)butanal + NAD(+) + H2O = 4-(trimethylamino)butanoate + NADH + 2 H(+). It carries out the reaction an aldehyde + NAD(+) + H2O = a carboxylate + NADH + 2 H(+). The protein operates within amine and polyamine biosynthesis; carnitine biosynthesis. Its function is as follows. Converts gamma-trimethylaminobutyraldehyde into gamma-butyrobetaine with high efficiency (in vitro). Can catalyze the irreversible oxidation of a broad range of aldehydes to the corresponding acids in an NAD-dependent reaction, but with low efficiency. This is 4-trimethylaminobutyraldehyde dehydrogenase (aldh9A1) from Oryzias latipes (Japanese rice fish).